A 311-amino-acid chain; its full sequence is Malate dehydrogenase (311 aa).

NAD(+)-binding positions include 7-13 (GAAGGIG) and D34. Substrate is bound by residues R81 and R87. NAD(+) is bound by residues N94 and 117-119 (ITN). Residues N119 and R153 each contribute to the substrate site. The active-site Proton acceptor is H177. M227 contacts NAD(+).

It belongs to the LDH/MDH superfamily. MDH type 1 family. As to quaternary structure, homodimer.

It catalyses the reaction (S)-malate + NAD(+) = oxaloacetate + NADH + H(+). In terms of biological role, catalyzes the reversible oxidation of malate to oxaloacetate. In Colwellia psychrerythraea (strain 34H / ATCC BAA-681) (Vibrio psychroerythus), this protein is Malate dehydrogenase.